The following is a 207-amino-acid chain: Casparian strip membrane protein 1 (207 aa).

The span at 1 to 12 (MEADSTTINVTE) shows a compositional bias: polar residues. The interval 1–20 (MEADSTTINVTETPKERKGK) is disordered. Residues 1–48 (MEADSTTINVTETPKERKGKAPLLAAPPASSGVKRVLQKAPKGGYKRG) lie on the Cytoplasmic side of the membrane. The helical transmembrane segment at 49-69 (LAVFDVVLRLAGIATALGAAI) threads the bilayer. Topologically, residues 70 to 98 (AMGSTDQTLPFFTQFFQFKAEFDDLPAFT) are extracellular. The chain crosses the membrane as a helical span at residues 99 to 119 (FFVIANAITAAYLALTIPISI). Residues 120–131 (VCIIRPHLVAPR) lie on the Cytoplasmic side of the membrane. The helical transmembrane segment at 132–152 (VLLIFLDTVMVALTTAAAGGT) threads the bilayer. Topologically, residues 153–184 (ASIVYLAHNGNSDANWPAICQQFNDXCQKVSG) are extracellular. Residues 185-205 (AVVASFLTVVVLMLLIVLSAF) form a helical membrane-spanning segment. Residues 206–207 (AL) are Cytoplasmic-facing.

This sequence belongs to the Casparian strip membrane proteins (CASP) family. In terms of assembly, homodimer and heterodimers.

It localises to the cell membrane. Regulates membrane-cell wall junctions and localized cell wall deposition. Required for establishment of the Casparian strip membrane domain (CSD) and the subsequent formation of Casparian strips, a cell wall modification of the root endodermis that determines an apoplastic barrier between the intraorganismal apoplasm and the extraorganismal apoplasm and prevents lateral diffusion. The chain is Casparian strip membrane protein 1 from Cynara cardunculus var. scolymus (Globe artichoke).